Consider the following 433-residue polypeptide: Enolase (433 aa).

Glutamine 167 serves as a coordination point for (2R)-2-phosphoglycerate. Residue glutamate 209 is the Proton donor of the active site. Mg(2+)-binding residues include aspartate 246, glutamate 291, and aspartate 318. Residues lysine 343, arginine 372, serine 373, and lysine 394 each coordinate (2R)-2-phosphoglycerate. Lysine 343 (proton acceptor) is an active-site residue.

Belongs to the enolase family. As to quaternary structure, component of the RNA degradosome, a multiprotein complex involved in RNA processing and mRNA degradation. Mg(2+) is required as a cofactor.

The protein resides in the cytoplasm. Its subcellular location is the secreted. It localises to the cell surface. It carries out the reaction (2R)-2-phosphoglycerate = phosphoenolpyruvate + H2O. It participates in carbohydrate degradation; glycolysis; pyruvate from D-glyceraldehyde 3-phosphate: step 4/5. Catalyzes the reversible conversion of 2-phosphoglycerate (2-PG) into phosphoenolpyruvate (PEP). It is essential for the degradation of carbohydrates via glycolysis. This chain is Enolase, found in Tolumonas auensis (strain DSM 9187 / NBRC 110442 / TA 4).